We begin with the raw amino-acid sequence, 115 residues long: Aspartate 1-decarboxylase (115 aa).

Serine 24 serves as the catalytic Schiff-base intermediate with substrate; via pyruvic acid. Serine 24 bears the Pyruvic acid (Ser) mark. Threonine 56 is a substrate binding site. Catalysis depends on tyrosine 57, which acts as the Proton donor. 72–74 (GAA) provides a ligand contact to substrate.

Belongs to the PanD family. As to quaternary structure, heterooctamer of four alpha and four beta subunits. Pyruvate is required as a cofactor. Is synthesized initially as an inactive proenzyme, which is activated by self-cleavage at a specific serine bond to produce a beta-subunit with a hydroxyl group at its C-terminus and an alpha-subunit with a pyruvoyl group at its N-terminus.

Its subcellular location is the cytoplasm. The catalysed reaction is L-aspartate + H(+) = beta-alanine + CO2. Its pathway is cofactor biosynthesis; (R)-pantothenate biosynthesis; beta-alanine from L-aspartate: step 1/1. In terms of biological role, catalyzes the pyruvoyl-dependent decarboxylation of aspartate to produce beta-alanine. This is Aspartate 1-decarboxylase from Pseudothermotoga lettingae (strain ATCC BAA-301 / DSM 14385 / NBRC 107922 / TMO) (Thermotoga lettingae).